A 524-amino-acid polypeptide reads, in one-letter code: Lysophospholipid acyltransferase LPCAT4 (524 aa).

2 consecutive transmembrane segments (helical) span residues 40 to 62 (CLLGVLLAPIRVLLAFIVLFLLW) and 87 to 107 (TVCHNGVLGLSRLLFFLLGFL). An HXXXXD motif motif is present at residues 129-134 (HSTFFD). Residue Asn152 is glycosylated (N-linked (GlcNAc...) asparagine). Residues 490–524 (PHKPRSTSQIPNASSPSSPTALANGTVQAPKQKGD) form a disordered region. The span at 495 to 518 (STSQIPNASSPSSPTALANGTVQA) shows a compositional bias: polar residues.

Belongs to the 1-acyl-sn-glycerol-3-phosphate acyltransferase family. As to expression, widely expressed with much higher level in brain. Expressed in erythroleukemic cells but not in reticulocytes.

It localises to the endoplasmic reticulum membrane. It catalyses the reaction a 1-acyl-sn-glycero-3-phosphoethanolamine + an acyl-CoA = a 1,2-diacyl-sn-glycero-3-phosphoethanolamine + CoA. The enzyme catalyses a 1-O-(1Z-alkenyl)-sn-glycero-3-phosphoethanolamine + an acyl-CoA = a 1-O-(1Z-alkenyl)-2-acyl-sn-glycero-3-phosphoethanolamine + CoA. It carries out the reaction a 1-acyl-sn-glycero-3-phosphocholine + an acyl-CoA = a 1,2-diacyl-sn-glycero-3-phosphocholine + CoA. The catalysed reaction is a 1-O-alkyl-sn-glycero-3-phosphocholine + acetyl-CoA = a 1-O-alkyl-2-acetyl-sn-glycero-3-phosphocholine + CoA. It catalyses the reaction a 1-acyl-sn-glycero-3-phospho-L-serine + an acyl-CoA = a 1,2-diacyl-sn-glycero-3-phospho-L-serine + CoA. The enzyme catalyses octanoyl-CoA + a 1-acyl-sn-glycero-3-phosphoethanolamine = 1-acyl-2-octanoyl-sn-glycero-3-phosphoethanolamine + CoA. It carries out the reaction a 1-acyl-sn-glycero-3-phosphoethanolamine + hexadecanoyl-CoA = 1-acyl-2-hexadecanoyl-sn-glycero-3-phosphoethanolamine + CoA. The catalysed reaction is a 1-acyl-sn-glycero-3-phosphoethanolamine + octadecanoyl-CoA = 1-acyl-2-octadecanoyl-sn-glycero-3-phosphoethanolamine + CoA. It catalyses the reaction a 1-acyl-sn-glycero-3-phosphoethanolamine + (9Z)-octadecenoyl-CoA = 1-acyl-2-(9Z)-octadecenoyl-sn-glycero-3-phosphoethanolamine + CoA. The enzyme catalyses a 1-acyl-sn-glycero-3-phosphoethanolamine + (5Z,8Z,11Z,14Z)-eicosatetraenoyl-CoA = 1-acyl-2-(5Z,8Z,11Z,14Z)-eicosatetraenoyl-sn-glycero-3-phosphoethanolamine + CoA. It carries out the reaction a 1-O-(1Z-alkenyl)-sn-glycero-3-phosphoethanolamine + octanoyl-CoA = 1-O-(1Z)-alkenyl-2-octanoyl-sn-glycero-3-phosphoethanolamine + CoA. The catalysed reaction is a 1-O-(1Z-alkenyl)-sn-glycero-3-phosphoethanolamine + hexadecanoyl-CoA = 1-O-(1Z)-alkenyl-2-hexadecanoyl-sn-glycero-3-phosphoethanolamine + CoA. It catalyses the reaction a 1-O-(1Z-alkenyl)-sn-glycero-3-phosphoethanolamine + octadecanoyl-CoA = 1-O-(1Z)-alkenyl-2-octadecanoyl-sn-glycero-3-phosphoethanolamine + CoA. The enzyme catalyses a 1-O-(1Z-alkenyl)-sn-glycero-3-phosphoethanolamine + (9Z)-octadecenoyl-CoA = 1-O-(1Z)-alkenyl-2-(9Z)-octadecenoyl-sn-glycero-3-phosphoethanolamine + CoA. It carries out the reaction a 1-O-(1Z-alkenyl)-sn-glycero-3-phosphoethanolamine + (5Z,8Z,11Z,14Z)-eicosatetraenoyl-CoA = 1-O-(1Z)-alkenyl-2-(5Z,8Z,11Z,14Z)-eicosatetraenoyl-sn-glycero-3-phosphoethanolamine + CoA. The catalysed reaction is a 1-acyl-sn-glycero-3-phosphocholine + hexadecanoyl-CoA = 1-acyl-2-hexadecanoyl-sn-glycero-3-phosphocholine + CoA. It catalyses the reaction a 1-acyl-sn-glycero-3-phosphocholine + (9Z)-octadecenoyl-CoA = a 1-acyl-2-(9Z)-octadecenoyl-sn-glycero-3-phosphocholine + CoA. The enzyme catalyses 1-O-hexadecyl-sn-glycero-3-phosphocholine + (9Z)-octadecenoyl-CoA = 1-O-hexadecyl-2-(9Z)-octadecenoyl-sn-glycero-3-phosphocholine + CoA. It carries out the reaction 1-O-hexadecyl-sn-glycero-3-phosphocholine + (5Z,8Z,11Z,14Z)-eicosatetraenoyl-CoA = 1-O-hexadecyl-2-(5Z,8Z,11Z,14Z)-eicosatetraenoyl-sn-glycero-3-phosphocholine + CoA. The catalysed reaction is 1-hexadecanoyl-sn-glycero-3-phospho-L-serine + (9Z)-octadecenoyl-CoA = 1-hexadecanoyl-2-(9Z-octadecenoyl)-sn-glycero-3-phospho-L-serine + CoA. It catalyses the reaction 1-octadecanoyl-sn-glycero-3-phospho-(1'-sn-glycerol) + (9Z)-octadecenoyl-CoA = 1-octadecanoyl-2-(9Z-octadecenoyl)-sn-glycero-3-phospho-(1'-sn-glycerol) + CoA. The enzyme catalyses 1-octadecanoyl-sn-glycero-3-phospho-(1'-sn-glycerol) + (5Z,8Z,11Z,14Z)-eicosatetraenoyl-CoA = 1-octadecanoyl-2-(5Z,8Z,11Z,14Z-eicosatetraenoyl)-sn-glycero-3-phospho-(1'-sn-glycerol) + CoA. The protein operates within lipid metabolism; phospholipid metabolism. Functionally, displays acyl-CoA-dependent lysophospholipid acyltransferase activity with a subset of lysophospholipids as substrates; converts lysophosphatidylethanolamine to phosphatidylethanolamine, 1-alkenyl-lysophatidylethanolamine to 1-alkenyl-phosphatidylethanolamine, lysophosphatidylglycerol and alkyl-lysophosphatidylcholine to phosphatidylglycerol and alkyl-phosphatidylcholine, respectively. In contrast, has no lysophosphatidylinositol, glycerol-3-phosphate, diacylglycerol or lysophosphatidic acid acyltransferase activity. Prefers long chain acyl-CoAs (C16, C18) as acyl donors. Converts lysophosphatidylcholine to phosphatidycholine. The chain is Lysophospholipid acyltransferase LPCAT4 (Lpcat4) from Mus musculus (Mouse).